A 173-amino-acid polypeptide reads, in one-letter code: Co-chaperone protein HscB homolog (173 aa).

Residues 5-77 (CHFALFDLQP…PRRARYLLAI (73 aa)) form the J domain.

This sequence belongs to the HscB family. As to quaternary structure, interacts with HscA and stimulates its ATPase activity.

Functionally, co-chaperone involved in the maturation of iron-sulfur cluster-containing proteins. Seems to help targeting proteins to be folded toward HscA. The sequence is that of Co-chaperone protein HscB homolog from Pseudomonas putida (strain W619).